The primary structure comprises 76 residues: Omega-agatoxin-Aa3a (76 aa).

6 disulfide bridges follow: cysteine 2/cysteine 19, cysteine 9/cysteine 25, cysteine 16/cysteine 52, cysteine 18/cysteine 40, cysteine 27/cysteine 38, and cysteine 59/cysteine 67.

It belongs to the neurotoxin 04 (omega-agtx) family. 03 (type II/III omega-agtx) subfamily. In terms of tissue distribution, expressed by the venom gland.

The protein resides in the secreted. Functionally, omega-agatoxin are antagonist of voltage-gated calcium channels. They block insect neuromuscular transmission presynaptically. Potent blocker of N- (Cav2.2/CACNA1B) and L-type (Cav1/CACNA1) calcium channels. The sequence is that of Omega-agatoxin-Aa3a from Agelenopsis aperta (North American funnel-web spider).